Consider the following 431-residue polypeptide: Enolase (431 aa).

A (2R)-2-phosphoglycerate-binding site is contributed by glutamine 167. The active-site Proton donor is the glutamate 209. 3 residues coordinate Mg(2+): aspartate 246, glutamate 289, and aspartate 316. Lysine 341, arginine 370, serine 371, and lysine 392 together coordinate (2R)-2-phosphoglycerate. The active-site Proton acceptor is the lysine 341.

Belongs to the enolase family. In terms of assembly, component of the RNA degradosome, a multiprotein complex involved in RNA processing and mRNA degradation. It depends on Mg(2+) as a cofactor.

It is found in the cytoplasm. It localises to the secreted. Its subcellular location is the cell surface. It carries out the reaction (2R)-2-phosphoglycerate = phosphoenolpyruvate + H2O. Its pathway is carbohydrate degradation; glycolysis; pyruvate from D-glyceraldehyde 3-phosphate: step 4/5. In terms of biological role, catalyzes the reversible conversion of 2-phosphoglycerate (2-PG) into phosphoenolpyruvate (PEP). It is essential for the degradation of carbohydrates via glycolysis. This chain is Enolase, found in Shewanella sediminis (strain HAW-EB3).